The primary structure comprises 662 residues: Bifunctional polymyxin resistance protein ArnA (662 aa).

Residues Met1–Leu307 form a formyltransferase ArnAFT region. His106 (proton donor; for formyltransferase activity) is an active-site residue. (6R)-10-formyltetrahydrofolate contacts are provided by residues Arg116 and Ile138–Asp142. The interval Arg316–Ala662 is dehydrogenase ArnADH. NAD(+) contacts are provided by residues Asp349 and Asp370–Ile371. UDP-alpha-D-glucuronate is bound by residues Ala395, Tyr400, and Thr434–Ser435. The Proton acceptor; for decarboxylase activity role is filled by Glu436. Residues Arg462, Asn493, Arg527 to Arg536, and Tyr614 contribute to the UDP-alpha-D-glucuronate site. Arg620 acts as the Proton donor; for decarboxylase activity in catalysis.

This sequence in the N-terminal section; belongs to the Fmt family. UDP-L-Ara4N formyltransferase subfamily. It in the C-terminal section; belongs to the NAD(P)-dependent epimerase/dehydratase family. UDP-glucuronic acid decarboxylase subfamily. As to quaternary structure, homohexamer, formed by a dimer of trimers.

It catalyses the reaction UDP-alpha-D-glucuronate + NAD(+) = UDP-beta-L-threo-pentopyranos-4-ulose + CO2 + NADH. It carries out the reaction UDP-4-amino-4-deoxy-beta-L-arabinose + (6R)-10-formyltetrahydrofolate = UDP-4-deoxy-4-formamido-beta-L-arabinose + (6S)-5,6,7,8-tetrahydrofolate + H(+). It functions in the pathway nucleotide-sugar biosynthesis; UDP-4-deoxy-4-formamido-beta-L-arabinose biosynthesis; UDP-4-deoxy-4-formamido-beta-L-arabinose from UDP-alpha-D-glucuronate: step 1/3. Its pathway is nucleotide-sugar biosynthesis; UDP-4-deoxy-4-formamido-beta-L-arabinose biosynthesis; UDP-4-deoxy-4-formamido-beta-L-arabinose from UDP-alpha-D-glucuronate: step 3/3. It participates in bacterial outer membrane biogenesis; lipopolysaccharide biosynthesis. In terms of biological role, bifunctional enzyme that catalyzes the oxidative decarboxylation of UDP-glucuronic acid (UDP-GlcUA) to UDP-4-keto-arabinose (UDP-Ara4O) and the addition of a formyl group to UDP-4-amino-4-deoxy-L-arabinose (UDP-L-Ara4N) to form UDP-L-4-formamido-arabinose (UDP-L-Ara4FN). The modified arabinose is attached to lipid A and is required for resistance to polymyxin and cationic antimicrobial peptides. The sequence is that of Bifunctional polymyxin resistance protein ArnA from Pseudomonas aeruginosa (strain UCBPP-PA14).